We begin with the raw amino-acid sequence, 815 residues long: MEPRTDGAECGVQVFCRIRPLNKTEEKNADRFLPKFPSEDSISLGGKVYVFDKVFKPNTTQEQVYKGAAYHIVQDVLSGYNGTVFAYGQTSSGKTHTMEGVIGDNGLSGIIPRIVADIFNHIYSMDENLQFHIKVSYYEIYNEKIRDLLDPEKVNLSIHEDKNRVPYVKGATERFVGGPDEVLQAIEDGKSNRMVAVTNMNEHSSRSHSVFLITVKQEHQTTKKQLTGKLYLVDLAGSEKVSKTGAQGTVLEEAKNINKSLTALGIVISALAEGTKSHVPYRDSKLTRILQESLGGNSRTTVIICASPSHFNEAETKSTLLFGARAKTIKNVVQINEELTAEEWKRRYEKEKEKNTRLAALLQAAALELSRWRAGESVSEVEWVNLSDSAQMAVSEVSGGSTPLMERSIAPAPPMLTSTTGPITDEEKKKYEEERVKLYQQLDEKDDEIQKVSQELEKLRQQVLLQEEALGTMRENEELIREENNRFQKEAEDKQQEGKEMMTALEEIAVNLDVRQAECEKLKRELEVVQEDNQSLEDRMNQATSLLNAHLDECGPKIRHFKEGIYNVIREFNIADIASQNDQLPDHDLLNHVRIGVSKLFSEYSAAKESSTAAEHDAEAKLAADVARVESGQDAGRMKQLLVKDQAAKEIKPLTDRVNMELTTLKNLKKEFMRVLVARCQANQDTEGEDSLSGPAQKQRIQFLENNLDKLTKVHKQLVRDNADLRVELPKMEARLRGREDRIKILETALRDSKQRSQAERKKYQQEVERIKEAVRQRNMRRMNAPQIVKPIRPGQVYTSPSAGMSQGAPNGSNA.

One can recognise a Kinesin motor domain in the interval 11–329 (GVQVFCRIRP…LLFGARAKTI (319 aa)). Residue 88–95 (GQTSSGKT) coordinates ATP. Coiled-coil stretches lie at residues 335–374 (INEELTAEEWKRRYEKEKEKNTRLAALLQAAALELSRWRA), 422–554 (PITD…LDEC), and 695–785 (PAQK…RMNA). Residues 788–815 (IVKPIRPGQVYTSPSAGMSQGAPNGSNA) are disordered. The span at 797–815 (VYTSPSAGMSQGAPNGSNA) shows a compositional bias: polar residues.

It belongs to the TRAFAC class myosin-kinesin ATPase superfamily. Kinesin family. Kinesin subfamily. As to quaternary structure, oligomer composed of two heavy chains and two light chains.

The protein localises to the cytoplasm. Its subcellular location is the cytoskeleton. Functionally, microtubule-dependent motor protein required for organelle transport. Plays a role in endosome transport. Required for the transport of mitochondria along the axon of motor neurons. Involved in the nuclear migration of hyp7 hypodermal precursor cells. Required for the formation of dendritic branches of PVD sensory neurons. In non-ciliated neurons such as the PVD and PHC neurons, required for the organization of minus-end out microtubules in dendrites. Also required for the minus-end out orientation of microtubules in dendrites of AQR gas-sensing neurons. Involved in the localization of unc-33 to neurites. Positively regulates cilium position and dendrite morphogenesis in the postembryonic AQR and PQR gas-sensing neurons. Plays a more prominent role in regulating dendrite morphogenesis in AQR than in PQR neurons. Plays a role in regulating the localization of grdn-1 to the distal dendrites of AQR sensory neurons. In Caenorhabditis elegans, this protein is Kinesin heavy chain.